A 170-amino-acid polypeptide reads, in one-letter code: Putative beta-eliminating lyase-like protein (170 aa).

Lys-32 bears the N6-(pyridoxal phosphate)lysine mark.

Belongs to the beta-eliminating lyase family. It depends on pyridoxal 5'-phosphate as a cofactor.

This chain is Putative beta-eliminating lyase-like protein, found in Dictyostelium discoideum (Social amoeba).